Consider the following 327-residue polypeptide: tRNA dimethylallyltransferase (327 aa).

14–21 (GPTASGKT) is an ATP binding site. 16-21 (TASGKT) contacts substrate. 2 interaction with substrate tRNA regions span residues 39 to 42 (DSAL) and 163 to 167 (QRIQR).

Belongs to the IPP transferase family. In terms of assembly, monomer. Mg(2+) serves as cofactor.

It carries out the reaction adenosine(37) in tRNA + dimethylallyl diphosphate = N(6)-dimethylallyladenosine(37) in tRNA + diphosphate. Its function is as follows. Catalyzes the transfer of a dimethylallyl group onto the adenine at position 37 in tRNAs that read codons beginning with uridine, leading to the formation of N6-(dimethylallyl)adenosine (i(6)A). The sequence is that of tRNA dimethylallyltransferase from Xanthomonas oryzae pv. oryzae (strain PXO99A).